The following is a 370-amino-acid chain: Developmentally-regulated GTP-binding protein 1 homolog (370 aa).

The region spanning 65 to 292 (ARVGLIGFPS…LLDKIWEYLK (228 aa)) is the OBG-type G domain. GTP is bound by residues 71 to 78 (GFPSVGKS), 117 to 121 (DLPGI), and 250 to 253 (NKID). The 78-residue stretch at 292–369 (KLIRVYTKPK…ADEDIVQIVK (78 aa)) folds into the TGS domain.

This sequence belongs to the TRAFAC class OBG-HflX-like GTPase superfamily. OBG GTPase family.

The protein is Developmentally-regulated GTP-binding protein 1 homolog (drg1) of Dictyostelium discoideum (Social amoeba).